The primary structure comprises 56 residues: MAKKGSTLLVKLASSAKTGFFYVKKRNPKKLINKLSFRKYDPVVRKHVLFSEEKLK.

The protein belongs to the bacterial ribosomal protein bL33 family.

This is Large ribosomal subunit protein bL33 from Ehrlichia canis (strain Jake).